A 180-amino-acid chain; its full sequence is Trafficking protein particle complex subunit 3 (180 aa).

Cys-68 is lipidated: S-palmitoyl cysteine.

It belongs to the TRAPP small subunits family. BET3 subfamily. As to quaternary structure, homodimer. Component of the multisubunit transport protein particle (TRAPP) complex, which includes at least TRAPPC2, TRAPPC2L, TRAPPC3, TRAPPC3L, TRAPPC4, TRAPPC5, TRAPPC8, TRAPPC9, TRAPPC10, TRAPPC11 and TRAPPC12. Heterodimer with TRAPPC6A. The heterodimer TRAPPC3-TRAPPC6A interacts with TRAPPC2L. Heterodimer with TRAPPC6b. The heterodimer TRAPPC6B-TRAPPC3 interacts with TRAPPC1 likely providing a core for TRAPP complex formation. As to expression, widely expressed. Expressed in lung, heart, liver, spleen, brain and kidney.

Its subcellular location is the golgi apparatus. It is found in the cis-Golgi network. It localises to the endoplasmic reticulum. Functionally, may play a role in vesicular transport from endoplasmic reticulum to Golgi. The chain is Trafficking protein particle complex subunit 3 from Mus musculus (Mouse).